Consider the following 1342-residue polypeptide: DNA-directed RNA polymerase subunit beta (1342 aa).

This sequence belongs to the RNA polymerase beta chain family. In terms of assembly, the RNAP catalytic core consists of 2 alpha, 1 beta, 1 beta' and 1 omega subunit. When a sigma factor is associated with the core the holoenzyme is formed, which can initiate transcription.

It carries out the reaction RNA(n) + a ribonucleoside 5'-triphosphate = RNA(n+1) + diphosphate. Functionally, DNA-dependent RNA polymerase catalyzes the transcription of DNA into RNA using the four ribonucleoside triphosphates as substrates. This chain is DNA-directed RNA polymerase subunit beta, found in Colwellia psychrerythraea (strain 34H / ATCC BAA-681) (Vibrio psychroerythus).